The following is a 144-amino-acid chain: ATP synthase epsilon chain (144 aa).

It belongs to the ATPase epsilon chain family. As to quaternary structure, F-type ATPases have 2 components, CF(1) - the catalytic core - and CF(0) - the membrane proton channel. CF(1) has five subunits: alpha(3), beta(3), gamma(1), delta(1), epsilon(1). CF(0) has three main subunits: a, b and c.

Its subcellular location is the cell inner membrane. Produces ATP from ADP in the presence of a proton gradient across the membrane. The chain is ATP synthase epsilon chain from Hydrogenovibrio crunogenus (strain DSM 25203 / XCL-2) (Thiomicrospira crunogena).